Consider the following 170-residue polypeptide: uncharacterized protein (170 aa).

Residues 7-27 traverse the membrane as a helical segment; sequence LVELLIGLAIISIALNFAVPL.

It localises to the membrane. This is an uncharacterized protein from Haemophilus influenzae (strain ATCC 51907 / DSM 11121 / KW20 / Rd).